Here is a 99-residue protein sequence, read N- to C-terminus: Large ribosomal subunit protein bL27 (99 aa).

Residues 1–9 (MLLMNLQLF) constitute a propeptide that is removed on maturation.

The protein belongs to the bacterial ribosomal protein bL27 family. Post-translationally, the N-terminus is cleaved by ribosomal processing cysteine protease Prp.

The chain is Large ribosomal subunit protein bL27 from Clostridium novyi (strain NT).